The chain runs to 259 residues: UPF0246 protein NMCC_0856 (259 aa).

The protein belongs to the UPF0246 family.

The sequence is that of UPF0246 protein NMCC_0856 from Neisseria meningitidis serogroup C (strain 053442).